Consider the following 638-residue polypeptide: Signal recognition particle receptor subunit alpha (638 aa).

Disordered regions lie at residues 129 to 205, 218 to 245, and 262 to 315; these read KIRA…VELS, IQKH…KKAP, and SAPT…ATKG. Basic and acidic residues-rich tracts occupy residues 137–146 and 153–165; these read KKFEDSEKAK and IETR…EKAK. S177 carries the post-translational modification Phosphoserine. A compositionally biased stretch (basic and acidic residues) spans 218 to 239; the sequence is IQKHGRGLEKSSKSTKSDAPKE. T284 is subject to Phosphothreonine. Phosphoserine is present on residues S296, S297, and S298. The span at 304 to 314 shows a compositional bias: polar residues; the sequence is AQNASKPSATK. The interval 419–636 is NG domain; the sequence is YVVTFCGVNG…NAKAVVAALM (218 aa). 425 to 432 serves as a coordination point for GTP; sequence GVNGVGKS. S473 is subject to Phosphoserine. 520–524 is a GTP binding site; it reads DTAGR. At T578 the chain carries Phosphothreonine. Residue 588–591 participates in GTP binding; it reads TKFD.

This sequence belongs to the GTP-binding SRP family. Heterodimer with SRPRB. Interacts with the signal recognition particle (SRP) complex subunit SRP54.

It is found in the endoplasmic reticulum membrane. Functionally, component of the SRP (signal recognition particle) receptor. Ensures, in conjunction with the signal recognition particle, the correct targeting of the nascent secretory proteins to the endoplasmic reticulum membrane system. Forms a guanosine 5'-triphosphate (GTP)-dependent complex with the SRP subunit SRP54. SRP receptor compaction and GTPase rearrangement drive SRP-mediated cotranslational protein translocation into the ER. The chain is Signal recognition particle receptor subunit alpha from Canis lupus familiaris (Dog).